The primary structure comprises 439 residues: MNISVSMNKFDSKIKFVQLVFVDINGMPKGMEIPASRLEEAVTDGISFDGSSVPGFQGIEDSDLVFKADPDTYVEVPWDNVARVYGFIYKDNKPYGADPRGILKRALEELEKEGYKAYIGPEPEFYLFKKNGTWELEIPDVGGYFDILTLDKARDIRREIAEYMPSFGLIPEVLHHEVGKAQHEIDFRYDEALKTADNIVSFKYITKAVAEMHGLYATFMPKPLFGFPGNGMHLHISLWKDGENVFMGEEGLSEIALHFIGGILKHAKALTAVTNPTVNSYKRLVPSYEAPVYISWGYRNRSALIRVPAFWGKGARIEYRCPDPSANPYFAFAAVLKAGLDGIKHKIDPFAYVEENVYEMSEEKRKELGIETLPGSLGEALEELEKDKVVKEALGDAYKNFINYKWKEWESYLEYLEEKHMPKDTKKVTEWELERYFFL.

The GS beta-grasp domain occupies 12–93 (SKIKFVQLVF…VYGFIYKDNK (82 aa)). The GS catalytic domain maps to 99–439 (PRGILKRALE…EWELERYFFL (341 aa)). Mg(2+)-binding residues include glutamate 122 and glutamate 124. Glutamate 172 serves as a coordination point for ATP. The Mg(2+) site is built by glutamate 177 and glutamate 184. Glycine 229 contacts L-glutamate. A Mg(2+)-binding site is contributed by histidine 233. ATP contacts are provided by residues 235 to 237 (HIS) and serine 237. Residues arginine 283, glutamate 289, and arginine 301 each contribute to the L-glutamate site. 3 residues coordinate ATP: arginine 301, arginine 306, and lysine 313. Glutamate 318 is a binding site for Mg(2+). Arginine 320 contributes to the L-glutamate binding site.

The protein belongs to the glutamine synthetase family. As to quaternary structure, oligomer of 12 subunits arranged in the form of two hexagons. The cofactor is Mg(2+).

Its subcellular location is the cytoplasm. It catalyses the reaction L-glutamate + NH4(+) + ATP = L-glutamine + ADP + phosphate + H(+). Its function is as follows. Probably involved in nitrogen metabolism via ammonium assimilation. Catalyzes the ATP-dependent biosynthesis of glutamine from glutamate and ammonia. This Pyrococcus furiosus (strain ATCC 43587 / DSM 3638 / JCM 8422 / Vc1) protein is Glutamine synthetase.